Reading from the N-terminus, the 603-residue chain is MNMLPTLTLISLIILTSPIMLSPLRIHETRNFPHYVKMAVSYAFMVSMVPAMIFMHSGHEAVISNWHWMTIHTLKLSLSFKLDYFSLIFMPVALFVTWSIMEFSLWYMNSDPYINRFFKYLLLFLITMIILITANNLFQLFIGWEGVGIMSFLLIGWWYGRTDANTAALQAMIYNRIGDVGFVAAMAWFLLHSNSWELQQIFLTVPKGNTLPLTGLLLAAMGKSAQFGLHPWLPSAMEGPTPVSALLHSSTMVVAGVFLLIRFHPLMEMNPSILTLTLCVGAITTLFTAICALTQNDIKKIIAFSTSSQLGLMMVTIGINQPHLAFLHICTHAFFKAMLFMCSGSIIHSLGDEQDIRKMGGLYKTLPFTTTALIIGSLALTGMPFLTGFYSKDLIIEAMSSSYTNAWALLITFIATSMTAVYSTRIIFFTLLGQPRYPTLIQINENNPLLTNAIKRLMLGSIFAGFLISSNLPPTTVPPMTMPHHLKFMALAVTLLGFALAIELSSFTYHLKFDYPSHTYKFSNMLGYYPTIIHRSPPHYLLNTSQNLTSTIMDLAWLEKSIPKSLALMQKSASTTISNQKGMIKLYFLSFLISLTLGLLLII.

A run of 16 helical transmembrane segments spans residues 4–24, 38–58, 87–107, 117–137, 140–160, 171–191, 211–233, 241–261, 273–293, 301–320, 331–351, 366–386, 409–429, 457–477, 488–508, and 583–603; these read LPTL…LSPL, MAVS…MHSG, LIFM…SLWY, FFKY…ANNL, LFIG…WWYG, AMIY…WFLL, LPLT…HPWL, TPVS…FLLI, ILTL…ICAL, IIAF…IGIN, THAF…HSLG, LPFT…MPFL, LLIT…IIFF, LMLG…PTTV, FMAL…SSFT, and MIKL…LLII.

Belongs to the complex I subunit 5 family.

It is found in the mitochondrion inner membrane. It catalyses the reaction a ubiquinone + NADH + 5 H(+)(in) = a ubiquinol + NAD(+) + 4 H(+)(out). Functionally, core subunit of the mitochondrial membrane respiratory chain NADH dehydrogenase (Complex I) that is believed to belong to the minimal assembly required for catalysis. Complex I functions in the transfer of electrons from NADH to the respiratory chain. The immediate electron acceptor for the enzyme is believed to be ubiquinone. The polypeptide is NADH-ubiquinone oxidoreductase chain 5 (MT-ND5) (Dugong dugon (Dugong)).